A 346-amino-acid polypeptide reads, in one-letter code: UDP-3-O-acylglucosamine N-acyltransferase (346 aa).

Residue His240 is the Proton acceptor of the active site.

Belongs to the transferase hexapeptide repeat family. LpxD subfamily. Homotrimer.

The catalysed reaction is a UDP-3-O-[(3R)-3-hydroxyacyl]-alpha-D-glucosamine + a (3R)-hydroxyacyl-[ACP] = a UDP-2-N,3-O-bis[(3R)-3-hydroxyacyl]-alpha-D-glucosamine + holo-[ACP] + H(+). The protein operates within bacterial outer membrane biogenesis; LPS lipid A biosynthesis. Functionally, catalyzes the N-acylation of UDP-3-O-acylglucosamine using 3-hydroxyacyl-ACP as the acyl donor. Is involved in the biosynthesis of lipid A, a phosphorylated glycolipid that anchors the lipopolysaccharide to the outer membrane of the cell. This is UDP-3-O-acylglucosamine N-acyltransferase from Bacteroides fragilis (strain YCH46).